The chain runs to 514 residues: Endogenous retrovirus group PABLB member 1 Env polyprotein (514 aa).

An N-linked (GlcNAc...) asparagine glycan is attached at Asn58. Positions 60-316 (STSNVFLQWA…YPYLPHVVNQ (257 aa)) are surface protein. Residues 82–85 (CWVC) carry the CXXC motif. 6 N-linked (GlcNAc...) asparagine glycosylation sites follow: Asn133, Asn140, Asn155, Asn218, Asn226, and Asn267. Residues 317–514 (GTRAIVHRND…QRDIFHSNAP (198 aa)) form a transmembrane protein region. Residues 328-348 (LPTIFMPSVGLGTVIQHIEAL) form a fusion peptide region. N-linked (GlcNAc...) asparagine glycosylation is found at Asn350 and Asn357. The CKS-17 motif lies at 378-394 (LQNRMALDILTAAEGGT). Cysteines 395 and 402 form a disulfide. Positions 395–403 (CALIKTECC) match the CX6CC motif. Asn408 and Asn412 each carry an N-linked (GlcNAc...) asparagine glycan. Residues 452–472 (ILIVLATLWSVGIALCCGLYF) traverse the membrane as a helical segment.

This sequence belongs to the gamma type-C retroviral envelope protein family. HERV class-I R(b) env subfamily. Post-translationally, the CXXC motif is highly conserved across a broad range of retroviral envelope proteins. It is thought to participate in the formation of a labile disulfide bond possibly with the CX6CC motif present in the transmembrane domain. Low expression in placenta and testis.

It is found in the cell membrane. Functionally, retroviral envelope proteins mediate receptor recognition and membrane fusion during early infection. Endogenous envelope proteins may have kept, lost or modified their original function during evolution. This endogenous envelope protein has lost its original fusogenic properties. This Homo sapiens (Human) protein is Endogenous retrovirus group PABLB member 1 Env polyprotein (ERVPABLB-1).